The following is a 233-amino-acid chain: 4'-phosphopantetheinyl transferase psf-1 (233 aa).

Mg(2+) contacts are provided by D110, E112, and E154. The tract at residues 161–192 (GKGISYGLSSFTARLSEDGQATLRLPDHEAPC) is peptidyl carrier protein binding.

It belongs to the P-Pant transferase superfamily. Gsp/Sfp/HetI/AcpT family. It depends on Mg(2+) as a cofactor.

It carries out the reaction apo-[peptidyl-carrier protein] + CoA = holo-[peptidyl-carrier protein] + adenosine 3',5'-bisphosphate + H(+). Its function is as follows. Probably activates the peptidyl carrier protein (PCP) domains of surfactin synthetase by transferring the 4'-phosphopantetheinyl moiety of coenzyme A (CoA) to a serine residue. Required for the production of the lipopeptide antibiotic, surfactin. The chain is 4'-phosphopantetheinyl transferase psf-1 (psf-1) from Bacillus pumilus (Bacillus mesentericus).